Consider the following 312-residue polypeptide: Zinc-finger homeodomain protein 4 (312 aa).

Residues 20–74 (GGGGSHGHMIHHHDHHAANSAPPTHNNNNTTQPPPMPLHGNGHGNNYDHHHHQDP) form a disordered region. Low complexity predominate over residues 37–50 (ANSAPPTHNNNNTT). Residues 90 to 139 (YKECLKNHAAAMGGNATDGCGEFMPSGEDGSIEALTCSACNCHRNFHRKE) form a ZF-HD dimerization-type; degenerate zinc finger. Positions 218 to 281 (KKRFRTKFTP…NNKIHFSKKN (64 aa)) form a DNA-binding region, homeobox.

Homo- and heterodimer with other ZFHD proteins. Interacts with ZHD1, ZHD2, ZHD5, ZHD7, ZHD8, ZHD10 and ZHD11. As to expression, mostly expressed in flowers and inflorescence.

The protein resides in the nucleus. In terms of biological role, putative transcription factor. Probably involved in the regulation of floral induction. In Arabidopsis thaliana (Mouse-ear cress), this protein is Zinc-finger homeodomain protein 4 (ZHD4).